A 262-amino-acid polypeptide reads, in one-letter code: Acyl-[acyl-carrier-protein]--UDP-N-acetylglucosamine O-acyltransferase (262 aa).

This sequence belongs to the transferase hexapeptide repeat family. LpxA subfamily. As to quaternary structure, homotrimer.

The protein resides in the cytoplasm. The catalysed reaction is a (3R)-hydroxyacyl-[ACP] + UDP-N-acetyl-alpha-D-glucosamine = a UDP-3-O-[(3R)-3-hydroxyacyl]-N-acetyl-alpha-D-glucosamine + holo-[ACP]. The protein operates within glycolipid biosynthesis; lipid IV(A) biosynthesis; lipid IV(A) from (3R)-3-hydroxytetradecanoyl-[acyl-carrier-protein] and UDP-N-acetyl-alpha-D-glucosamine: step 1/6. Its function is as follows. Involved in the biosynthesis of lipid A, a phosphorylated glycolipid that anchors the lipopolysaccharide to the outer membrane of the cell. The polypeptide is Acyl-[acyl-carrier-protein]--UDP-N-acetylglucosamine O-acyltransferase (Yersinia enterocolitica serotype O:8 / biotype 1B (strain NCTC 13174 / 8081)).